The primary structure comprises 815 residues: RNA-binding protein 5 (815 aa).

The interval Met-1–Asp-93 is disordered. A phosphoserine mark is found at Ser-18, Ser-59, Ser-69, Ser-72, and Ser-78. Residues Lys-98–Pro-178 form the RRM 1 domain. The RanBP2-type zinc-finger motif lies at Lys-181–Asp-210. The RRM 2 domain maps to Asp-231–Ser-315. The required for interaction with U2AF2 stretch occupies residues Val-321 to Ala-809. 2 disordered regions span residues Ala-407 to Ser-468 and Ala-508 to Ile-540. The span at Gln-411–Pro-422 shows a compositional bias: polar residues. The span at Pro-426–Thr-446 shows a compositional bias: low complexity. Ser-444 is subject to Phosphoserine. Residues Thr-452 to Lys-535 form a sufficient for interaction with ACIN1, PRPF8, SFRS3, SNRPB, SNRPN, SNRNP70 and SNRNP200 region. Positions Glu-510 to Leu-519 are enriched in polar residues. A phosphoserine mark is found at Ser-621 and Ser-624. The C2H2-type zinc finger occupies Met-647–His-672. Residues His-743–Ser-789 enclose the G-patch domain.

Belongs to the RBM5/RBM10 family. In terms of assembly, component of the spliceosome A complex (also known as the prespliceosome). Appears to dissociate from the spliceosome upon formation of the spliceosome B complex (also known as the precatalytic spliceosome), in which the heterotrimeric U4/U6.U5 snRNPs are bound. Interacts with U2AF2; this interaction is direct. Also interacts with ACIN1, PRPF8, SFRS3, SNRPB, SNRPN, SNRNP70 and SNRNP200; these interactions may be indirect.

The protein localises to the nucleus. In terms of biological role, component of the spliceosome A complex. Binds to ssRNA containing the consensus sequence 5'-AGGUAA-3'. Regulates alternative splicing of a number of mRNAs. May modulate splice site pairing after recruitment of the U1 and U2 snRNPs to the 5' and 3' splice sites of the intron. May both positively and negatively regulate apoptosis by regulating the alternative splicing of several genes involved in this process, including FAS and CASP2/caspase-2. In the case of FAS, promotes production of a soluble form of FAS that inhibits apoptosis. In the case of CASP2/caspase-2, promotes production of a catalytically active form of CASP2/Caspase-2 that induces apoptosis. The chain is RNA-binding protein 5 (Rbm5) from Rattus norvegicus (Rat).